The primary structure comprises 381 residues: MAQDFNVTPWEVKGKVDYDKLIVQFGTQKITSELKEKIKSIINDELHVMLRRDVFFSHRDLDLVLKDYQDGKGFFLYTGRAPSLGMHIGHLIPFIFTKWLQDKFNVNLYIEITDDEKFMRNPEYTLDQTRQWAYDNILDIIAVGFNPDKTFIFQDTEYIRNMYPIAIKIAKKLTFSEVRATFGLDTSSNIGIIWYPALQIAPTMFEKRRCLIPAGIDQDPYWRLQRDIAESLGYYKAAQIHSKFLPPLTGPEGKMSSSQPETAIYLTDDPKTVERKIMKYAFSGGQPTIELHRKYGGNPDIDVSFQWLYMFFEPDDNKIKKIEEDYRSGALLTGELKQILIEKLNDFLEEHRQKREEAKKLVNVFKYDGELAREMWRKIHE.

A 'HIGH' region motif is present at residues 82 to 90 (PSLGMHIGH). The 'KMSKS' region motif lies at 254-258 (KMSSS).

This sequence belongs to the class-I aminoacyl-tRNA synthetase family.

The protein localises to the cytoplasm. The catalysed reaction is tRNA(Trp) + L-tryptophan + ATP = L-tryptophyl-tRNA(Trp) + AMP + diphosphate + H(+). This is Tryptophan--tRNA ligase from Sulfurisphaera tokodaii (strain DSM 16993 / JCM 10545 / NBRC 100140 / 7) (Sulfolobus tokodaii).